The sequence spans 608 residues: MLRTHLSGELRKENAGQSVTLTGWVNRRRDHGGVIFIDLRDRTGIAQVVFRNEDVAERAHALRSEFVLRVTGVVEERPEGSQNPNLASGDIEVSVTEFEVLNESAPLPFQIEDSSSAGEVGEETRLKYRYLDLRRPVQANALRLRSAANKAARTVLDSHDFTEIETPTLTRSTPEGARDFLVPARLRPGTFYALPQSPQLFKQLLQVAGMERYYQIARCYRDEDFRADRQPEFTQLDVEMSFVDQDDVIALGEEIISEVWKLIGYEIKTPIPRMTYADAMRRYGSDKPDLRFDIEITECTEFFQDTTFRVFKNEYVGAVVMTGGASQPRRQLDAWQEWAKQRGAKGLAYILVGEDGELSGPVAKNITDAERAGIAAHVGAQPGDCIFFAAGDTKSSRALLGAARGEIAKKLDLIKEGDWAFTWIVDAPMFEPAADATASGDVALGNSKWTAVHHAFTSPKPEFLDNFDTNPGDALAYAYDIVCNGNEIGGGSIRIHQRDVQERVFEVMGITGEEAREKFGFLLDAFAFGAPPHGGIAFGWDRIVSLLGGFDSIRDVIAFPKSGGGIDPLTDAPAAITPQQRKEAGIDAKPKPKAEAQAEAQAEESAEK.

Glutamate 175 is an L-aspartate binding site. Residues 199-202 are aspartate; sequence QLFK. Arginine 221 serves as a coordination point for L-aspartate. ATP is bound by residues 221–223 and glutamine 230; that span reads RDE. Histidine 453 contacts L-aspartate. Position 487 (glutamate 487) interacts with ATP. An L-aspartate-binding site is contributed by arginine 494. 539–542 provides a ligand contact to ATP; sequence GWDR. The segment at 566–608 is disordered; that stretch reads IDPLTDAPAAITPQQRKEAGIDAKPKPKAEAQAEAQAEESAEK. A compositionally biased stretch (basic and acidic residues) spans 580 to 596; that stretch reads QRKEAGIDAKPKPKAEA.

Belongs to the class-II aminoacyl-tRNA synthetase family. Type 1 subfamily. As to quaternary structure, homodimer.

It is found in the cytoplasm. It carries out the reaction tRNA(Asx) + L-aspartate + ATP = L-aspartyl-tRNA(Asx) + AMP + diphosphate. Functionally, aspartyl-tRNA synthetase with relaxed tRNA specificity since it is able to aspartylate not only its cognate tRNA(Asp) but also tRNA(Asn). Reaction proceeds in two steps: L-aspartate is first activated by ATP to form Asp-AMP and then transferred to the acceptor end of tRNA(Asp/Asn). The sequence is that of Aspartate--tRNA(Asp/Asn) ligase from Corynebacterium glutamicum (strain R).